The following is a 498-amino-acid chain: Probable dipeptidase B (498 aa).

Cys26 is an active-site residue.

This sequence belongs to the peptidase C69 family.

It carries out the reaction an L-aminoacyl-L-amino acid + H2O = 2 an L-alpha-amino acid. This Streptococcus pyogenes serotype M1 protein is Probable dipeptidase B (pepDB).